The following is a 454-amino-acid chain: Chromosomal replication initiator protein DnaA (454 aa).

The interval 1–71 (MTKEQWGQLQ…HEVRQEDPAV (71 aa)) is domain I, interacts with DnaA modulators. The tract at residues 71–112 (VRRLRFAVPSHVNATTKPARPAQATAPRAPAEKTPRSTLSTA) is domain II. A disordered region spans residues 82–108 (VNATTKPARPAQATAPRAPAEKTPRST). A compositionally biased stretch (low complexity) spans 84-99 (ATTKPARPAQATAPRA). The domain III, AAA+ region stretch occupies residues 113 to 334 (PLDARFTFDN…GALTRLCAFA (222 aa)). ATP-binding residues include Gly-157, Gly-159, Lys-160, and Thr-161. The interval 335-454 (SLVGREIDME…LELLRRALEE (120 aa)) is domain IV, binds dsDNA.

Belongs to the DnaA family. As to quaternary structure, oligomerizes as a right-handed, spiral filament on DNA at oriC.

It is found in the cytoplasm. Its function is as follows. Plays an essential role in the initiation and regulation of chromosomal replication. ATP-DnaA binds to the origin of replication (oriC) to initiate formation of the DNA replication initiation complex once per cell cycle. Binds the DnaA box (a 9 base pair repeat at the origin) and separates the double-stranded (ds)DNA. Forms a right-handed helical filament on oriC DNA; dsDNA binds to the exterior of the filament while single-stranded (ss)DNA is stabiized in the filament's interior. The ATP-DnaA-oriC complex binds and stabilizes one strand of the AT-rich DNA unwinding element (DUE), permitting loading of DNA polymerase. After initiation quickly degrades to an ADP-DnaA complex that is not apt for DNA replication. Binds acidic phospholipids. The protein is Chromosomal replication initiator protein DnaA of Roseobacter denitrificans (strain ATCC 33942 / OCh 114) (Erythrobacter sp. (strain OCh 114)).